The primary structure comprises 585 residues: MSHDNKPTDSTPAASNFLRSIIDQDLAASTYAGRQDKAGEPLPTVITRFPPEPNGYLHIGHAKSICLNFGLARDYGGRCHLRFDDTNPVKEDTEYVDSIIDAVHWLGFSWDSEGKDGTRQPHLYYASDYFDQLYAFAETLIERGAAYIDSQTAEQIAASRGNFSEPGKPSPYRERSVEENLQLFRDMRAGKYADGEHVLRAKIDMTAPNIVMRDPVLYRIRHAHHHRTGDKWCIYPMYDFTHCISDALENITHSLCTLEFENNRPLYDWVLEHLRDSGVFRDPLPHQYEFARLNLTYAITSKRKLKQLVDEQRVDGWDDPRMPTLVGVRRRGYTPESIQLFCDRVGVAKADSWIDMSTLEGAVRDDLDGRAARGVAVLDPLKLIIDNYPEGQSEECSAPVHPKKPELGKRVFPLSRELWIEREDFNETPPKGYFRLFPGNKVRLKYGYVIECTGVDKDADGNVIAVHASYLPETKSGTPGADSVKVKGVIHWVSAAHAYEAEVRLYDRLFNDPNPDAGGKNFLDALNPDSKQVITAYLEPGLREAQPEDRFQFERHGYFVADRTDSQPGKPVFNRIVGLKDSWGK.

The short motif at 51 to 61 is the 'HIGH' region element; sequence PEPNGYLHIGH. Residues 52-54 and 58-64 contribute to the ATP site; these read EPN and HIGHAKS. L-glutamine is bound by residues Asp-84 and Tyr-238. ATP-binding positions include Thr-257 and 292 to 293; that span reads RL. A 'KMSKS' region motif is present at residues 299-303; sequence ITSKR.

The protein belongs to the class-I aminoacyl-tRNA synthetase family. Monomer.

It is found in the cytoplasm. It carries out the reaction tRNA(Gln) + L-glutamine + ATP = L-glutaminyl-tRNA(Gln) + AMP + diphosphate. The chain is Glutamine--tRNA ligase from Cupriavidus necator (strain ATCC 17699 / DSM 428 / KCTC 22496 / NCIMB 10442 / H16 / Stanier 337) (Ralstonia eutropha).